Consider the following 186-residue polypeptide: Ribosome-recycling factor (186 aa).

It belongs to the RRF family.

The protein resides in the cytoplasm. Its function is as follows. Responsible for the release of ribosomes from messenger RNA at the termination of protein biosynthesis. May increase the efficiency of translation by recycling ribosomes from one round of translation to another. This Cupriavidus necator (strain ATCC 17699 / DSM 428 / KCTC 22496 / NCIMB 10442 / H16 / Stanier 337) (Ralstonia eutropha) protein is Ribosome-recycling factor.